Consider the following 943-residue polypeptide: Translation initiation factor IF-2 (943 aa).

The tract at residues 29–349 is disordered; it reads LSVKSHSSSV…NNRGNSAPKL (321 aa). Composition is skewed to basic and acidic residues over residues 69–82, 112–137, 145–155, 163–196, and 224–253; these read PKEE…DKAS, FKAE…DNRN, QGKRHNNDRRN, DHNK…RDNA, and RQSE…EKQQ. The segment covering 254–266 has biased composition (low complexity); the sequence is AEVAVQKAAAETK. The span at 296 to 309 shows a compositional bias: basic and acidic residues; it reads KSRDNHRVNEDGPK. The span at 313–332 shows a compositional bias: low complexity; sequence NNKWNNQNQVRNQRNSNWNK. Residues 445 to 614 form the tr-type G domain; sequence ERAPVVTIMG…LLVAEVEELK (170 aa). The interval 454-461 is G1; sequence GHVDHGKT. Position 454–461 (454–461) interacts with GTP; the sequence is GHVDHGKT. Positions 479–483 are G2; sequence GITQH. The tract at residues 500 to 503 is G3; the sequence is DTPG. Residues 500–504 and 554–557 contribute to the GTP site; these read DTPGH and NKID. The G4 stretch occupies residues 554 to 557; it reads NKID. A G5 region spans residues 590 to 592; the sequence is SAK.

Belongs to the TRAFAC class translation factor GTPase superfamily. Classic translation factor GTPase family. IF-2 subfamily.

It localises to the cytoplasm. Functionally, one of the essential components for the initiation of protein synthesis. Protects formylmethionyl-tRNA from spontaneous hydrolysis and promotes its binding to the 30S ribosomal subunits. Also involved in the hydrolysis of GTP during the formation of the 70S ribosomal complex. This chain is Translation initiation factor IF-2, found in Streptococcus thermophilus (strain ATCC BAA-491 / LMD-9).